The following is a 270-amino-acid chain: Protein-ADP-ribose hydrolase (270 aa).

The region spanning 73–267 is the Macro domain; that stretch reads VSVKDCQKTN…LYDTYLQKEN (195 aa). Positions 92, 93, and 106 each coordinate ADP-D-ribose. Residues Cys112, His117, and Cys119 each contribute to the Zn(2+) site. ADP-D-ribose is bound by residues Cys119, Ile120, Asp121, Ser212, Thr213, Gly214, Glu215, and Phe216.

The protein belongs to the MacroD-type family. Zn-Macro subfamily. The cofactor is Zn(2+).

The enzyme catalyses 4-O-(ADP-D-ribosyl)-L-aspartyl-[protein] + H2O = L-aspartyl-[protein] + ADP-D-ribose + H(+). In terms of biological role, ADP-ribosylhydrolase that specifically reverses the SirTM-mediated mono-ADP-ribosylation at an asparatate residue of GcvH-L, by releasing ADP-ribose from the target protein. May play a role in the regulation of the response to host-induced oxidative stress. The protein is Protein-ADP-ribose hydrolase of Streptococcus pyogenes serotype M18 (strain MGAS8232).